We begin with the raw amino-acid sequence, 343 residues long: 3-hydroxy-3-methylglutaryl-CoA lyase, cytoplasmic (343 aa).

A lipid anchor (N-myristoyl glycine) is attached at Gly-2. A Pyruvate carboxyltransferase domain is found at 48 to 315 (VKIVEVGPRD…NTGVDLHKVM (268 aa)). Arg-56 contributes to the substrate binding site. Residues Asp-57, His-248, and His-250 each contribute to the a divalent metal cation site. Residue Cys-281 is part of the active site. Residue Asn-290 participates in a divalent metal cation binding.

The protein belongs to the HMG-CoA lyase family. It depends on a divalent metal cation as a cofactor. Present at high level in duodenum and small intestine (at protein level).

The protein resides in the cytoplasm. It localises to the cytosol. The protein localises to the endoplasmic reticulum membrane. It carries out the reaction (3S)-3-hydroxy-3-methylglutaryl-CoA = acetoacetate + acetyl-CoA. It participates in metabolic intermediate metabolism; (S)-3-hydroxy-3-methylglutaryl-CoA degradation; acetoacetate from (S)-3-hydroxy-3-methylglutaryl-CoA: step 1/1. Non-mitochondrial 3-hydroxy-3-methylglutaryl-CoA lyase that catalyzes a cation-dependent cleavage of (S)-3-hydroxy-3-methylglutaryl-CoA into acetyl-CoA and acetoacetate, a key step in ketogenesis, the products of which support energy production in nonhepatic animal tissues. This chain is 3-hydroxy-3-methylglutaryl-CoA lyase, cytoplasmic (Hmgcll1), found in Rattus norvegicus (Rat).